A 349-amino-acid polypeptide reads, in one-letter code: Protein-arginine kinase (349 aa).

The Phosphagen kinase C-terminal domain maps to 24 to 252; it reads IVLSSRIRLA…SQIIEQERQA (229 aa). Residues 27-31, His89, Arg123, 174-178, and 205-210 each bind ATP; these read SSRIR, RASVM, and RGIYGE. Positions 335 to 340 match the RDXXRA motif of the pArg binding pocket involved in allosteric regulation motif; that stretch reads RDIKRA.

Belongs to the ATP:guanido phosphotransferase family.

The enzyme catalyses L-arginyl-[protein] + ATP = N(omega)-phospho-L-arginyl-[protein] + ADP + H(+). With respect to regulation, appears to be allosterically activated by the binding of pArg-containing polypeptides to the pArg-binding pocket localized in the C-terminal domain of McsB. Functionally, catalyzes the specific phosphorylation of arginine residues in proteins. This chain is Protein-arginine kinase, found in Halothermothrix orenii (strain H 168 / OCM 544 / DSM 9562).